A 942-amino-acid polypeptide reads, in one-letter code: Valine--tRNA ligase (942 aa).

The 'HIGH' region signature appears at 43–53 (PNVTGTLHMGH). The 'KMSKS' region motif lies at 551-555 (KMSKS). Lysine 554 contacts ATP. Positions 876 to 942 (EGLVDLDAER…AGLREQRAKL (67 aa)) form a coiled coil.

Belongs to the class-I aminoacyl-tRNA synthetase family. ValS type 1 subfamily. Monomer.

The protein resides in the cytoplasm. It carries out the reaction tRNA(Val) + L-valine + ATP = L-valyl-tRNA(Val) + AMP + diphosphate. Catalyzes the attachment of valine to tRNA(Val). As ValRS can inadvertently accommodate and process structurally similar amino acids such as threonine, to avoid such errors, it has a 'posttransfer' editing activity that hydrolyzes mischarged Thr-tRNA(Val) in a tRNA-dependent manner. This chain is Valine--tRNA ligase, found in Stenotrophomonas maltophilia (strain K279a).